The chain runs to 205 residues: Methylthioribulose-1-phosphate dehydratase (205 aa).

Cysteine 75 serves as a coordination point for substrate. Histidine 93 and histidine 95 together coordinate Zn(2+). Residue glutamate 116 is the Proton donor/acceptor of the active site. Histidine 171 is a binding site for Zn(2+).

The protein belongs to the aldolase class II family. MtnB subfamily. Zn(2+) serves as cofactor.

Its subcellular location is the cytoplasm. It carries out the reaction 5-(methylsulfanyl)-D-ribulose 1-phosphate = 5-methylsulfanyl-2,3-dioxopentyl phosphate + H2O. It functions in the pathway amino-acid biosynthesis; L-methionine biosynthesis via salvage pathway; L-methionine from S-methyl-5-thio-alpha-D-ribose 1-phosphate: step 2/6. Catalyzes the dehydration of methylthioribulose-1-phosphate (MTRu-1-P) into 2,3-diketo-5-methylthiopentyl-1-phosphate (DK-MTP-1-P). The protein is Methylthioribulose-1-phosphate dehydratase of Kluyveromyces lactis (strain ATCC 8585 / CBS 2359 / DSM 70799 / NBRC 1267 / NRRL Y-1140 / WM37) (Yeast).